The chain runs to 362 residues: 3-dehydroquinate synthase (362 aa).

NAD(+) is bound by residues 74–79, 108–112, 132–133, K145, K154, and 172–175; these read DGEGYK, GVIGD, TT, and TLDT. 3 residues coordinate Zn(2+): E187, H250, and H267.

It belongs to the sugar phosphate cyclases superfamily. Dehydroquinate synthase family. The cofactor is Co(2+). Zn(2+) is required as a cofactor. NAD(+) serves as cofactor.

The protein resides in the cytoplasm. The catalysed reaction is 7-phospho-2-dehydro-3-deoxy-D-arabino-heptonate = 3-dehydroquinate + phosphate. It participates in metabolic intermediate biosynthesis; chorismate biosynthesis; chorismate from D-erythrose 4-phosphate and phosphoenolpyruvate: step 2/7. Catalyzes the conversion of 3-deoxy-D-arabino-heptulosonate 7-phosphate (DAHP) to dehydroquinate (DHQ). This Geobacter sp. (strain M21) protein is 3-dehydroquinate synthase.